We begin with the raw amino-acid sequence, 436 residues long: MDVEQEDAIKGWKIRRLIEYLEKAKGNGTSLISLIIPPKEQISLINQKLTDAHGRAQNIKSKAVQKAVQDAIISTKQKLSVIKQIPPNGLILYCGKFIGEDEKTEKQILEVLEPLRAINTTFFLCENTFYTQPLRDMLQEQDKFGFIIMDGNGSLFGTLQGNAREILHKFDVDLPKKHGRGGQSALRFARLRLEKRHNYMKKVAEVAINCFIQNDRVNVLGIVLAGAAEFKNELAANEYLDQRIRAKVVTIIDVNYGGENGFNQAIELSQVQLQNVKFIKEKNLITKLFEEVAQNSITVCYGLTDTMKALEMGAVETLVIWENLEFIWFKLKNPVTKEESTVVLSPQQATEKNHFQDEANQCELNIVERFALTEWLIDNYKNYGARLEFVTDRSQEGSQFVKGFGGICGFLRYEVNFEKMEFQEEEGYLDPDEDFL.

Belongs to the eukaryotic release factor 1 family. In terms of assembly, heterodimer of two subunits, one of which binds GTP.

Its subcellular location is the cytoplasm. In terms of biological role, directs the termination of nascent peptide synthesis (translation) in response to the termination codon UGA. In L.striatus UAA and UAG codes for glutamine. The polypeptide is Eukaryotic peptide chain release factor subunit 1 (eRF1) (Loxodes striatus).